The chain runs to 337 residues: Phosphate acyltransferase (337 aa).

It belongs to the PlsX family. As to quaternary structure, homodimer. Probably interacts with PlsY.

The protein resides in the cytoplasm. It catalyses the reaction a fatty acyl-[ACP] + phosphate = an acyl phosphate + holo-[ACP]. Its pathway is lipid metabolism; phospholipid metabolism. Its function is as follows. Catalyzes the reversible formation of acyl-phosphate (acyl-PO(4)) from acyl-[acyl-carrier-protein] (acyl-ACP). This enzyme utilizes acyl-ACP as fatty acyl donor, but not acyl-CoA. This chain is Phosphate acyltransferase, found in Latilactobacillus sakei subsp. sakei (strain 23K) (Lactobacillus sakei subsp. sakei).